A 164-amino-acid chain; its full sequence is Crossover junction endodeoxyribonuclease RuvC (164 aa).

Active-site residues include Asp-7, Glu-67, and Asp-140. Residues Asp-7, Glu-67, and Asp-140 each coordinate Mg(2+).

The protein belongs to the RuvC family. As to quaternary structure, homodimer which binds Holliday junction (HJ) DNA. The HJ becomes 2-fold symmetrical on binding to RuvC with unstacked arms; it has a different conformation from HJ DNA in complex with RuvA. In the full resolvosome a probable DNA-RuvA(4)-RuvB(12)-RuvC(2) complex forms which resolves the HJ. Mg(2+) serves as cofactor.

Its subcellular location is the cytoplasm. It carries out the reaction Endonucleolytic cleavage at a junction such as a reciprocal single-stranded crossover between two homologous DNA duplexes (Holliday junction).. Its function is as follows. The RuvA-RuvB-RuvC complex processes Holliday junction (HJ) DNA during genetic recombination and DNA repair. Endonuclease that resolves HJ intermediates. Cleaves cruciform DNA by making single-stranded nicks across the HJ at symmetrical positions within the homologous arms, yielding a 5'-phosphate and a 3'-hydroxyl group; requires a central core of homology in the junction. The consensus cleavage sequence is 5'-(A/T)TT(C/G)-3'. Cleavage occurs on the 3'-side of the TT dinucleotide at the point of strand exchange. HJ branch migration catalyzed by RuvA-RuvB allows RuvC to scan DNA until it finds its consensus sequence, where it cleaves and resolves the cruciform DNA. The polypeptide is Crossover junction endodeoxyribonuclease RuvC (Pelotomaculum thermopropionicum (strain DSM 13744 / JCM 10971 / SI)).